A 308-amino-acid chain; its full sequence is Glycine betaine uptake system ATP-binding protein YehX (308 aa).

Residues 2–235 enclose the ABC transporter domain; the sequence is IEFSHVSKLF…PANDFVRQFF (234 aa). 34 to 41 is a binding site for ATP; it reads GTSGSGKS.

Belongs to the ABC transporter superfamily. The complex is composed of two ATP-binding proteins (YehX), two transmembrane proteins (YehW and YehY) and a solute-binding protein (YehZ).

It carries out the reaction glycine betaine(out) + ATP + H2O = glycine betaine(in) + ADP + phosphate + H(+). Functionally, part of an ABC transporter complex involved in low-affinity glycine betaine uptake. Probably responsible for energy coupling to the transport system. This Escherichia coli (strain K12) protein is Glycine betaine uptake system ATP-binding protein YehX (yehX).